A 165-amino-acid chain; its full sequence is 5-formyltetrahydrofolate cyclo-ligase (165 aa).

4–8 provides a ligand contact to ATP; the sequence is KNSLR. Substrate contacts are provided by Ile51 and Glu56. Position 116–124 (116–124) interacts with ATP; the sequence is RIGFGKGYY. Asp125 serves as a coordination point for Mg(2+). ATP-binding residues include Arg126 and Trp154. Position 155 (Asp155) interacts with Mg(2+).

It belongs to the 5-formyltetrahydrofolate cyclo-ligase family. Monomer or homodimer. The cofactor is Mg(2+).

The protein localises to the cytoplasm. It carries out the reaction (6S)-5-formyl-5,6,7,8-tetrahydrofolate + ATP = (6R)-5,10-methenyltetrahydrofolate + ADP + phosphate. Functionally, involved in folate metabolism. Catalyzes the irreversible conversion of 5-formyltetrahydrofolate (5-FTHF) to yield 5,10-methenyltetrahydrofolate. The chain is 5-formyltetrahydrofolate cyclo-ligase from Mycoplasma genitalium (strain ATCC 33530 / DSM 19775 / NCTC 10195 / G37) (Mycoplasmoides genitalium).